The sequence spans 243 residues: Segregation and condensation protein A (243 aa).

It belongs to the ScpA family. Component of a cohesin-like complex composed of ScpA, ScpB and the Smc homodimer, in which ScpA and ScpB bind to the head domain of Smc. The presence of the three proteins is required for the association of the complex with DNA.

It is found in the cytoplasm. Functionally, participates in chromosomal partition during cell division. May act via the formation of a condensin-like complex containing Smc and ScpB that pull DNA away from mid-cell into both cell halves. The protein is Segregation and condensation protein A of Thermoanaerobacter pseudethanolicus (strain ATCC 33223 / 39E) (Clostridium thermohydrosulfuricum).